Consider the following 88-residue polypeptide: Elongation factor 1-beta (88 aa).

This sequence belongs to the EF-1-beta/EF-1-delta family.

In terms of biological role, promotes the exchange of GDP for GTP in EF-1-alpha/GDP, thus allowing the regeneration of EF-1-alpha/GTP that could then be used to form the ternary complex EF-1-alpha/GTP/AAtRNA. The protein is Elongation factor 1-beta (ef1b) of Thermoplasma acidophilum (strain ATCC 25905 / DSM 1728 / JCM 9062 / NBRC 15155 / AMRC-C165).